The chain runs to 96 residues: UPF0235 protein YggU (96 aa).

This sequence belongs to the UPF0235 family.

The polypeptide is UPF0235 protein YggU (Salmonella agona (strain SL483)).